The sequence spans 147 residues: Transthyretin (147 aa).

The signal sequence occupies residues methionine 1–alanine 20. Cysteine 30 is subject to Sulfocysteine. Lysine 35 is a binding site for L-thyroxine. Glutamate 62 is subject to 4-carboxyglutamate. Serine 72 carries the post-translational modification Phosphoserine. Residue glutamate 74 participates in L-thyroxine binding. Asparagine 118 is a glycosylation site (N-linked (GlcNAc...) asparagine). Position 137 (serine 137) interacts with L-thyroxine.

The protein belongs to the transthyretin family. Homotetramer. Dimer of dimers. In the homotetramer, subunits assemble around a central channel that can accommodate two ligand molecules. Interacts with RBP4. Sulfonation of the reactive cysteine Cys-30 enhances the stability of the native conformation of TTR, avoiding misassembly of the protein leading to amyloid formation. As to expression, detected in liver.

The protein localises to the secreted. Its function is as follows. Thyroid hormone-binding protein. Probably transports thyroxine from the bloodstream to the brain. This chain is Transthyretin (TTR), found in Pongo abelii (Sumatran orangutan).